The sequence spans 327 residues: Flotillin-like protein FloA (327 aa).

A run of 2 helical transmembrane segments spans residues 6-26 (VLFFVVIGLAIIALAVFFTFV) and 28-48 (IMLWISALAAGVRISIFTLVG).

It belongs to the flotillin-like FloA family. As to quaternary structure, homooligomerizes.

The protein localises to the cell membrane. Its subcellular location is the membrane raft. Found in functional membrane microdomains (FMM) that may be equivalent to eukaryotic membrane rafts. FMMs are highly dynamic and increase in number as cells age. Flotillins are thought to be important factors in membrane fluidity. This Priestia megaterium (strain DSM 319 / IMG 1521) (Bacillus megaterium) protein is Flotillin-like protein FloA.